Consider the following 224-residue polypeptide: MSNPVFLALDIPRLEAGKALVDKVKAHIGGVKLGMEFFYAHGHHGVHEIAHCGLPVFLDLKLHDIPNTVAAAMQSIHVLEPAIVTVHASGGRAMMEDAKAAAGENTKVVGVTMLTSLDERDLERTGVDGSPHDHVMRLAELAENAGLDGIVCSGQEVGAVHKQWKQGFFVVPGLRPAGSASGDQKRVVTPRQARDDGASVLVIGRPISKADDPEQAARDIEATL.

Substrate contacts are provided by residues Asp10, Lys32, Asp59 to Thr68, Thr115, Arg175, Gln184, Gly204, and Arg205. Lys61 (proton donor) is an active-site residue.

This sequence belongs to the OMP decarboxylase family. Type 1 subfamily. In terms of assembly, homodimer.

It carries out the reaction orotidine 5'-phosphate + H(+) = UMP + CO2. The protein operates within pyrimidine metabolism; UMP biosynthesis via de novo pathway; UMP from orotate: step 2/2. Catalyzes the decarboxylation of orotidine 5'-monophosphate (OMP) to uridine 5'-monophosphate (UMP). The protein is Orotidine 5'-phosphate decarboxylase of Erythrobacter litoralis (strain HTCC2594).